The primary structure comprises 1921 residues: Endoribonuclease Dicer (1921 aa).

One can recognise a Helicase ATP-binding domain in the interval 51 to 227 (LLEAALDHNT…ELEEKIKKLE (177 aa)). Residue 64–71 (LNTGSGKT) coordinates ATP. A DECH box motif is present at residues 175–178 (DECH). Positions 409 to 433 (YVSWSDSEDDDEDEEIEEKEKPETN) are disordered. The span at 414-425 (DSEDDDEDEEIE) shows a compositional bias: acidic residues. The Helicase C-terminal domain occupies 433–602 (NFPSPFTNIL…SVDTSETETE (170 aa)). A Dicer dsRNA-binding fold domain is found at 630–722 (AIGHINRYCA…MPVGKETVKY (93 aa)). Residues 727–746 (DLHDEEETSVPGRPGSTKRR) are disordered. The PAZ domain occupies 895 to 1042 (KFMEDIEKSE…LVPELCAIHP (148 aa)). The tract at residues 1270-1289 (NLSKDKVDSEKNTSSGYSSK) is disordered. 2 consecutive RNase III domains span residues 1277–1404 (DSEK…EETT) and 1665–1823 (FENF…MDSG). Residues glutamate 1317, aspartate 1396, glutamate 1399, and glutamate 1704 each coordinate Mg(2+). The tract at residues 1782–1801 (QGMDSELRRSEEDEEKEEDI) is disordered. Mg(2+) is bound by residues aspartate 1809 and glutamate 1812. Residues 1848–1913 (VPRSPVRELL…ARRALRSLKA (66 aa)) form the DRBM domain.

Belongs to the helicase family. Dicer subfamily. In terms of assembly, component of the RISC loading complex (RLC), or micro-RNA (miRNA) loading complex (miRLC), which is composed of DICER1, AGO2 and TARBP2; DICER1 and TARBP2 are required to process precursor miRNAs (pre-miRNAs) to mature miRNAs and then load them onto AGO2. Note that the trimeric RLC/miRLC is also referred to as RISC. The cofactor is Mg(2+). Mn(2+) is required as a cofactor.

Its subcellular location is the cytoplasm. It catalyses the reaction Endonucleolytic cleavage to 5'-phosphomonoester.. In terms of biological role, double-stranded RNA (dsRNA) endoribonuclease playing a central role in short dsRNA-mediated post-transcriptional gene silencing. Cleaves naturally occurring long dsRNAs and short hairpin pre-microRNAs (miRNA) into fragments of twenty-one to twenty-three nucleotides with 3' overhang of two nucleotides, producing respectively short interfering RNAs (siRNA) and mature microRNAs. SiRNAs and miRNAs serve as guide to direct the RNA-induced silencing complex (RISC) to complementary RNAs to degrade them or prevent their translation. Gene silencing mediated by siRNAs, also called RNA interference, controls the elimination of transcripts from mobile and repetitive DNA elements of the genome but also the degradation of exogenous RNA of viral origin for instance. The miRNA pathway on the other side is a mean to specifically regulate the expression of target genes. This chain is Endoribonuclease Dicer (DICER1), found in Gallus gallus (Chicken).